The sequence spans 473 residues: Tubulin gamma chain (473 aa).

Residues 33-56 (TDGLSQLPDSSTERDDDTKPFFRE) are disordered. Residues 43–56 (STERDDDTKPFFRE) show a composition bias toward basic and acidic residues. 143–149 (AGGTGSG) lines the GTP pocket.

Belongs to the tubulin family. As to quaternary structure, interacts with SPC72, SPC97 and SPC98.

It localises to the cytoplasm. The protein localises to the cytoskeleton. Its subcellular location is the microtubule organizing center. The protein resides in the spindle pole body. Tubulin is the major constituent of microtubules. The gamma chain is found at microtubule organizing centers (MTOC) such as the spindle poles or the centrosome, suggesting that it is involved in the minus-end nucleation of microtubule assembly. TUB4 is an important spindle pole body component that organizes both cytoplasmic and nuclear microtubule arrays. This chain is Tubulin gamma chain (TUB4), found in Saccharomyces cerevisiae (strain ATCC 204508 / S288c) (Baker's yeast).